Here is a 259-residue protein sequence, read N- to C-terminus: Indole-3-glycerol phosphate synthase (259 aa).

The protein belongs to the TrpC family.

The catalysed reaction is 1-(2-carboxyphenylamino)-1-deoxy-D-ribulose 5-phosphate + H(+) = (1S,2R)-1-C-(indol-3-yl)glycerol 3-phosphate + CO2 + H2O. It functions in the pathway amino-acid biosynthesis; L-tryptophan biosynthesis; L-tryptophan from chorismate: step 4/5. The sequence is that of Indole-3-glycerol phosphate synthase from Dehalococcoides mccartyi (strain ATCC BAA-2266 / KCTC 15142 / 195) (Dehalococcoides ethenogenes (strain 195)).